The sequence spans 203 residues: ATP-dependent Clp protease proteolytic subunit (203 aa).

The active-site Nucleophile is the Ser107. His132 is an active-site residue.

The protein belongs to the peptidase S14 family. Fourteen ClpP subunits assemble into 2 heptameric rings which stack back to back to give a disk-like structure with a central cavity, resembling the structure of eukaryotic proteasomes.

It localises to the cytoplasm. The enzyme catalyses Hydrolysis of proteins to small peptides in the presence of ATP and magnesium. alpha-casein is the usual test substrate. In the absence of ATP, only oligopeptides shorter than five residues are hydrolyzed (such as succinyl-Leu-Tyr-|-NHMec, and Leu-Tyr-Leu-|-Tyr-Trp, in which cleavage of the -Tyr-|-Leu- and -Tyr-|-Trp bonds also occurs).. Functionally, cleaves peptides in various proteins in a process that requires ATP hydrolysis. Has a chymotrypsin-like activity. Plays a major role in the degradation of misfolded proteins. The sequence is that of ATP-dependent Clp protease proteolytic subunit from Pelagibacter ubique (strain HTCC1062).